A 524-amino-acid chain; its full sequence is Glucose-6-phosphate isomerase (524 aa).

Catalysis depends on glutamate 322, which acts as the Proton donor. Residues histidine 351 and lysine 453 contribute to the active site.

It belongs to the GPI family.

It localises to the cytoplasm. It carries out the reaction alpha-D-glucose 6-phosphate = beta-D-fructose 6-phosphate. It participates in carbohydrate biosynthesis; gluconeogenesis. It functions in the pathway carbohydrate degradation; glycolysis; D-glyceraldehyde 3-phosphate and glycerone phosphate from D-glucose: step 2/4. Catalyzes the reversible isomerization of glucose-6-phosphate to fructose-6-phosphate. In Prochlorococcus marinus (strain NATL2A), this protein is Glucose-6-phosphate isomerase.